Consider the following 440-residue polypeptide: MKGLYIKTYGCQMNVYDSILMENIVKPLGFNVVSDAEQADLVILNTCHIREKAAEKLYSELGRIHSSQKNKEMTIVVAGCVAQAEGEEVFRRAPFVDIVVGPQSIPALPELIVKASRSKGHVINTDFPEVAKFDKLPDECYGNSQGSSAFLAIQEGCDKFCTFCVVPYTRGAEYSRPVNEIFREALNLVKNGAKEITLLGQNVNAYHGECEGEVWDLGKLISHIAKIEKLERIRYTTSHPRDMHESLYLVHAEESKLMPFVHLPVQSGSNKILHAMNRKHTAEEYLGIIDRLRKLKPEIEFSSDFIVGFPGETEKDFEETMKLVEKVKYAQAYSFKYSPRPGTPGAERKDQVPEEVKTERLLRLQELISKQQLEFNQSMIGKTIPVLFSDKKGKHQNQIIGKSPYMQSVCVDDPDDKYKDKIVNVRILEARQNSLLGCAA.

The region spanning 2–117 (KGLYIKTYGC…LPELIVKASR (116 aa)) is the MTTase N-terminal domain. [4Fe-4S] cluster-binding residues include Cys-11, Cys-47, Cys-80, Cys-157, Cys-161, and Cys-164. In terms of domain architecture, Radical SAM core spans 143-374 (NSQGSSAFLA…QELISKQQLE (232 aa)). Residues 377-440 (QSMIGKTIPV…RQNSLLGCAA (64 aa)) enclose the TRAM domain.

This sequence belongs to the methylthiotransferase family. MiaB subfamily. Monomer. [4Fe-4S] cluster serves as cofactor.

It is found in the cytoplasm. It catalyses the reaction N(6)-dimethylallyladenosine(37) in tRNA + (sulfur carrier)-SH + AH2 + 2 S-adenosyl-L-methionine = 2-methylsulfanyl-N(6)-dimethylallyladenosine(37) in tRNA + (sulfur carrier)-H + 5'-deoxyadenosine + L-methionine + A + S-adenosyl-L-homocysteine + 2 H(+). Its function is as follows. Catalyzes the methylthiolation of N6-(dimethylallyl)adenosine (i(6)A), leading to the formation of 2-methylthio-N6-(dimethylallyl)adenosine (ms(2)i(6)A) at position 37 in tRNAs that read codons beginning with uridine. This chain is tRNA-2-methylthio-N(6)-dimethylallyladenosine synthase, found in Wolbachia pipientis subsp. Culex pipiens (strain wPip).